The sequence spans 587 residues: Aspartate--tRNA ligase (587 aa).

Residue Glu-174 coordinates L-aspartate. The aspartate stretch occupies residues 198-201 (QITK). Arg-220 lines the L-aspartate pocket. ATP contacts are provided by residues 220-222 (RDE) and Gln-229. His-443 lines the L-aspartate pocket. Glu-477 serves as a coordination point for ATP. Arg-484 is an L-aspartate binding site. Residue 529 to 532 (GLDR) coordinates ATP.

It belongs to the class-II aminoacyl-tRNA synthetase family. Type 1 subfamily. In terms of assembly, homodimer.

Its subcellular location is the cytoplasm. The enzyme catalyses tRNA(Asp) + L-aspartate + ATP = L-aspartyl-tRNA(Asp) + AMP + diphosphate. In terms of biological role, catalyzes the attachment of L-aspartate to tRNA(Asp) in a two-step reaction: L-aspartate is first activated by ATP to form Asp-AMP and then transferred to the acceptor end of tRNA(Asp). This is Aspartate--tRNA ligase from Streptococcus pneumoniae (strain Taiwan19F-14).